The sequence spans 210 residues: MRPIAIIDYGMGNLLSVQKALDRLGYPVEVTDDPGEITAAPGVILPGVGAFADAMANLQQKGLVAAIREVAERGVPLLGICLGLQLLFSTSEEGGQVAGLDLLPGEVKRLPAGIKVPHMGWNQVRFPRPGALFRGIPGGTDFYFVHSYYIVPREEEVVTGTTEYGLEFAVSIQRGNLFGVQFHPEKSSRRGLEVLKNFGELVRHAGNAGH.

A Glutamine amidotransferase type-1 domain is found at 3–208; sequence PIAIIDYGMG…GELVRHAGNA (206 aa). Cys-81 (nucleophile) is an active-site residue. Residues His-183 and Glu-185 contribute to the active site.

Heterodimer of HisH and HisF.

It localises to the cytoplasm. The enzyme catalyses 5-[(5-phospho-1-deoxy-D-ribulos-1-ylimino)methylamino]-1-(5-phospho-beta-D-ribosyl)imidazole-4-carboxamide + L-glutamine = D-erythro-1-(imidazol-4-yl)glycerol 3-phosphate + 5-amino-1-(5-phospho-beta-D-ribosyl)imidazole-4-carboxamide + L-glutamate + H(+). It catalyses the reaction L-glutamine + H2O = L-glutamate + NH4(+). Its pathway is amino-acid biosynthesis; L-histidine biosynthesis; L-histidine from 5-phospho-alpha-D-ribose 1-diphosphate: step 5/9. Functionally, IGPS catalyzes the conversion of PRFAR and glutamine to IGP, AICAR and glutamate. The HisH subunit catalyzes the hydrolysis of glutamine to glutamate and ammonia as part of the synthesis of IGP and AICAR. The resulting ammonia molecule is channeled to the active site of HisF. The protein is Imidazole glycerol phosphate synthase subunit HisH of Moorella thermoacetica (strain ATCC 39073 / JCM 9320).